Here is a 64-residue protein sequence, read N- to C-terminus: Beta-defensin 5 (64 aa).

Residues 1 to 23 (MKIHYLLFAFLLVLLSPLAGVFS) form the signal peptide. 3 disulfides stabilise this stretch: Cys32–Cys60, Cys39–Cys53, and Cys43–Cys61.

This sequence belongs to the beta-defensin family.

It localises to the secreted. Has antibacterial activity. This is Beta-defensin 5 (Defb5) from Mus musculus (Mouse).